The sequence spans 811 residues: Actin filament-associated protein 1-like 2 (811 aa).

Disordered regions lie at residues 67-110 (KEAQ…PPPK) and 132-168 (EPYNASFNDDGEAVSSSYESYDEDESNKSKSAMQQHQ). The 97-residue stretch at 181 to 277 (DAMICAFLWR…WLKVIQDISG (97 aa)) folds into the PH 1 domain. The segment at 294–326 (QRQIHPKAEGTDRHSGASESGSSTDGHPETPEI) is disordered. A compositionally biased stretch (basic and acidic residues) spans 299-309 (PKAEGTDRHSG). Positions 359-453 (ALETSNYLNV…WLGLLLLESG (95 aa)) constitute a PH 2 domain. 2 disordered regions span residues 500 to 532 (RGQRYQQDDLYDDVDMSDIQGDEPKSEEKGEAE) and 558 to 631 (LGSP…KERV). 3 stretches are compositionally biased toward basic and acidic residues: residues 521-532 (DEPKSEEKGEAE), 566-577 (VSGKKDNEESER), and 622-631 (RLEKSNKERV). Residues 642–737 (LLGKNRTEAE…KENLRKAELG (96 aa)) adopt a coiled-coil conformation.

As to quaternary structure, interacts with src.

It is found in the cytoplasm. In terms of biological role, may play a role in a signaling cascade by enhancing the kinase activity of src. Contributes to src-regulated transcription activation. The polypeptide is Actin filament-associated protein 1-like 2 (afap1l2) (Xenopus laevis (African clawed frog)).